The primary structure comprises 857 residues: Cadherin-related family member 1a (857 aa).

A signal peptide spans 1–25; sequence MKNAREIQFSSFLLLAHFCFVGAQS. Over 26 to 709 the chain is Extracellular; it reads DYAPYFYDNG…RENPMHFLGL (684 aa). Cadherin domains lie at 40–139, 140–252, 253–359, 365–478, 479–582, and 574–693; these read NGNM…RPQF, QNMP…PPIF, IGTP…PPTF, PQNV…APKF, TSDF…PPAF, and DLND…GPLT. The chain crosses the membrane as a helical span at residues 710 to 730; it reads ISGVILILVFVTVIISTVIFV. Residues 731–857 are Cytoplasmic-facing; that stretch reads RRNKANRILP…LEQKNMANRY (127 aa). The tract at residues 746 to 765 is disordered; that stretch reads RKKRKPQKQDDFQEPFREEQ. Residues 752–765 are compositionally biased toward basic and acidic residues; it reads QKQDDFQEPFREEQ.

Expressed in photoreceptor cells of the outer nuclear layer of the retina and in the pinal gland.

The protein resides in the membrane. Potential calcium-dependent cell-adhesion protein. Plays a role in the organization of retinal cell layers and Muller glia morphology. The protein is Cadherin-related family member 1a of Danio rerio (Zebrafish).